The primary structure comprises 275 residues: Small ribosomal subunit protein uS2 (275 aa).

Residues 232–256 are disordered; that stretch reads ARATDGKPEPEPVPGQELGADEPLA.

This sequence belongs to the universal ribosomal protein uS2 family.

The sequence is that of Small ribosomal subunit protein uS2 from Acidothermus cellulolyticus (strain ATCC 43068 / DSM 8971 / 11B).